Consider the following 3179-residue polypeptide: Guanylate cyclase beta (3179 aa).

The Cytoplasmic portion of the chain corresponds to 1–60; the sequence is MKTQTLSLMNINGKRKFLGTNNKIYRKVIINPTSEDDIQKFCRNYFRIYNFSLYNFIRRL. Residues 61-81 traverse the membrane as a helical segment; it reads ISFDAILVYSLFLTVYIFSEI. Residues 82-88 are Extracellular-facing; the sequence is NHGETKK. The chain crosses the membrane as a helical span at residues 89-109; the sequence is YLFIDTAISLFFNIILLIVIE. The Cytoplasmic segment spans residues 110–295; it reads SLFELKKLKD…FCIKMNNIVY (186 aa). Residues 296-316 form a helical membrane-spanning segment; sequence YLIFMYFVFVVLSIVIKTIFF. Over 317–328 the chain is Extracellular; the sequence is HKKNSFQNSRDS. A helical membrane pass occupies residues 329–349; sequence FLSMLEDFVGLYILVLPIMMY. Topologically, residues 350–988 are cytoplasmic; sequence SEKSLIYIIQ…GRLNRFSLCK (639 aa). The chain crosses the membrane as a helical span at residues 989–1009; it reads VFLWIIYLKITVVSFYFFHNF. Topologically, residues 1010–1020 are extracellular; sequence DNYFSGSSASS. Residues 1021-1041 traverse the membrane as a helical segment; the sequence is ILYTQTTFALLHYFLIIAFSA. Over 1042 to 1069 the chain is Cytoplasmic; sequence YEIDLPYKFVRRLPYIYQLSRRKYFLNN. Residues 1070–1090 traverse the membrane as a helical segment; that stretch reads NIILLTIIEAILISLTSYYIL. The Extracellular portion of the chain corresponds to 1091–1102; sequence RLNVFHLITHRE. Residues 1103–1123 traverse the membrane as a helical segment; that stretch reads FTFHIFILNVFITTEKILLLS. At 1124–1127 the chain is on the cytoplasmic side; it reads KTWH. A helical membrane pass occupies residues 1128–1148; sequence IYFFIMAVLIIGILLIYVNIF. Over 1149 to 1168 the chain is Extracellular; sequence TLVDCIKNGKCEFSLFQMEN. The chain crosses the membrane as a helical span at residues 1169–1189; sequence IYFWTSLFPILYINFIFDKLM. The Cytoplasmic segment spans residues 1190–1304; that stretch reads KYIKNRIYPD…YEKGNKLKLR (115 aa). Residues 1305–1325 traverse the membrane as a helical segment; the sequence is IIVILLFLIYIIIFSSQTIID. The Extracellular segment spans residues 1326–1331; sequence INTKSN. The chain crosses the membrane as a helical span at residues 1332-1352; the sequence is IHYITMFYIIYFVLACVLLIY. Topologically, residues 1353–1360 are cytoplasmic; it reads IRIRNKAT. A helical membrane pass occupies residues 1361 to 1381; that stretch reads STFFFFLSRFLLICGFCIELY. Residues 1382–1401 lie on the Extracellular side of the membrane; it reads DNISNDILNVLITYSFTVSY. Asn-1383 is a glycosylation site (N-linked (GlcNAc...) asparagine). The helical transmembrane segment at 1402–1422 threads the bilayer; the sequence is IFFMSFKILEALLVCISILLL. Over 1423–1464 the chain is Cytoplasmic; the sequence is TFGVYYEKNKNMIDICTHFCSNPYLSINNLDHMNISCLCKKQ. A helical membrane pass occupies residues 1465 to 1485; that stretch reads IVIFLISLLSFTLICLSMKYY. The Extracellular segment spans residues 1486-1507; that stretch reads EIFYLKKKFLFRYKQKVNLAKQ. Residues 1508 to 1528 traverse the membrane as a helical segment; that stretch reads IEILHTMLPNFLVEYLLISDP. Topologically, residues 1529 to 2739 are cytoplasmic; the sequence is KNDGIMVGKN…IINIDLTKKL (1211 aa). The Guanylate cyclase 1 domain occupies 1548 to 1700; sequence SVIFCDIDDF…DTVNTASRMK (153 aa). Disordered stretches follow at residues 2123 to 2153, 2355 to 2379, and 2576 to 2656; these read LHNY…YTSS, SINK…KDKK, and KDSD…HHHS. The segment covering 2131-2142 has biased composition (basic residues); it reads NKNKNKKNNKNV. The segment covering 2584 to 2607 has biased composition (low complexity); it reads NNNKISKNRYNNNNNNNNSNYSNI. Over residues 2614–2645 the composition is skewed to basic residues; it reads HNNKKNHHHNNNKYHHHNNNKYHHHNNNKYHH. A helical membrane pass occupies residues 2740-2760; it reads IIIFIFTEIFLSLCNIIELSF. At 2761-2770 the chain is on the extracellular side; that stretch reads YEKKLRYNDS. Asn-2768 carries an N-linked (GlcNAc...) asparagine glycan. Residues 2771–2791 form a helical membrane-spanning segment; that stretch reads IVIIWLIRSIYLFIITYIWII. Over 2792-2809 the chain is Cytoplasmic; it reads LKTKLKEYKNNSSKMMWT. Residues 2810–2830 traverse the membrane as a helical segment; that stretch reads IFILNIFLCSWGIILIDLSCI. Residues 2831-2842 are Extracellular-facing; that stretch reads HYSMLLGNKNER. The helical transmembrane segment at 2843–2863 threads the bilayer; that stretch reads ALFFMKDASELIICIQLIFIK. At 2864–2870 the chain is on the cytoplasmic side; sequence NMLFKHK. Residues 2871–2891 form a helical membrane-spanning segment; that stretch reads FFFFVFFYIFLIYSFSKLFSI. Residues 2892–2895 are Extracellular-facing; sequence HTCQ. The chain crosses the membrane as a helical span at residues 2896-2916; the sequence is THICCSIILFISINILYFWYS. At 2917-3179 the chain is on the cytoplasmic side; the sequence is EYLDRIQFLV…KLRQKKGLRS (263 aa). The Guanylate cyclase 2 domain occupies 2968–3102; that stretch reads AFLFADIVGF…LDVLIANKIE (135 aa). Positions 2973, 2974, and 3017 each coordinate Mg(2+).

The protein in the N-terminal section; belongs to the cation transport ATPase (P-type) (TC 3.A.3) family. Type IV subfamily. This sequence in the C-terminal section; belongs to the adenylyl cyclase class-4/guanylyl cyclase family. Mg(2+) is required as a cofactor. Requires Mn(2+) as cofactor.

The protein localises to the membrane. It carries out the reaction GTP = 3',5'-cyclic GMP + diphosphate. Its activity is regulated as follows. Basal guanylate activity of the recombinant guanylate cyclase domains 1 and 2 is not modulated by an increase in Ca(2+) levels or by the gametogenesis inducer xanthurenic acid. Its function is as follows. Catalyzes the synthesis of the second messenger cGMP from GTP. Regulates cGMP production in gametocytes; however, is dispensable for the initiation of gametogenesis. Does not have adenylate cyclase activity. The polypeptide is Guanylate cyclase beta (Plasmodium falciparum (isolate 3D7)).